We begin with the raw amino-acid sequence, 566 residues long: MAPSTLICDTDSWQNLKTHVAEIKKTHLRDLMSDADRCKSMMVEFDGLLLDYSRQNATHDTMSKLFQLAEASHLKDKINQMFNGEHINSTENRSVLHVALRASRDAVINGDGKNVVPDVWQVLDKIRDFSEKIRSGSWVGVTGKPLTNVVAVGIGGSFLGPLFVHTALQTESEAAECAKGRQLRFLANVDPIDVAKNISGLNPETTLVVVVSKTFTTAETMLNARTLREWISSALGPAAVAKHMVAVSTNLTLVEKFGIDPKNAFAFWDWVGGRYSVCSAVGVLPLSLQYGFPIVEKFLKGASSIDQHFHSAPLEKNLPVLLGLLSLWNVSFLGHPARAILPYCQALEKFAPHIQQVSMESNGKGVSIDGVVLPFEAGEIDFGEPGTNGQHSFYQLIHQGRVIPCDFIGIAKSQQPVYLKGEVVSNHDELMSNFFAQPDALAYGKTQEELQKENISPHLVPHKTFTGNRPSLSLLLPSLTAYNVGQLLAIYEHRVAVEGFVWGINSFDQWGVELGKSLANQVRKQLHASRTNGEAVKGFNFSTTTVMAKYLQETSDVPAELPTKLP.

The Proton donor role is filled by E360. Residues H391 and K516 contribute to the active site.

This sequence belongs to the GPI family. Homodimer.

It localises to the cytoplasm. It catalyses the reaction alpha-D-glucose 6-phosphate = beta-D-fructose 6-phosphate. The protein operates within carbohydrate degradation; glycolysis; D-glyceraldehyde 3-phosphate and glycerone phosphate from D-glucose: step 2/4. The sequence is that of Glucose-6-phosphate isomerase, cytosolic (PGIC) from Spinacia oleracea (Spinach).